A 520-amino-acid polypeptide reads, in one-letter code: Hydroxymethylglutaryl-CoA synthase, cytoplasmic (520 aa).

Ser4 carries the phosphoserine modification. (3S)-3-hydroxy-3-methylglutaryl-CoA is bound by residues Asp43 and Ala44. 44–46 serves as a coordination point for CoA; sequence AGK. Lys46 is modified (N6-acetyllysine). The active-site Proton donor/acceptor is the Glu95. Positions 129, 167, 171, 221, and 264 each coordinate (3S)-3-hydroxy-3-methylglutaryl-CoA. Cys129 functions as the Acyl-thioester intermediate in the catalytic mechanism. Asn167 serves as a coordination point for CoA. Ser221 is a CoA binding site. His264 functions as the Proton donor/acceptor in the catalytic mechanism. Lys269 and Lys273 together coordinate CoA. 3 residues coordinate (3S)-3-hydroxy-3-methylglutaryl-CoA: Lys273, Asn343, and Ser377. At Lys273 the chain carries N6-acetyllysine. The tract at residues 486–520 is disordered; the sequence is SNTATEHIPSPAKKVPRLPATAAESESAVISNGEH. 2 positions are modified to phosphoserine: Ser495 and Ser516.

The protein belongs to the thiolase-like superfamily. HMG-CoA synthase family. As to quaternary structure, homodimer.

It is found in the cytoplasm. The catalysed reaction is acetoacetyl-CoA + acetyl-CoA + H2O = (3S)-3-hydroxy-3-methylglutaryl-CoA + CoA + H(+). It participates in metabolic intermediate biosynthesis; (R)-mevalonate biosynthesis; (R)-mevalonate from acetyl-CoA: step 2/3. Its function is as follows. This enzyme condenses acetyl-CoA with acetoacetyl-CoA to form HMG-CoA, which is converted by HMG-CoA reductase (HMGCR) into mevalonate, a precursor for cholesterol synthesis. The polypeptide is Hydroxymethylglutaryl-CoA synthase, cytoplasmic (Cricetulus griseus (Chinese hamster)).